The sequence spans 396 residues: 1-deoxy-D-xylulose 5-phosphate reductoisomerase (396 aa).

Positions 13, 14, 15, 16, and 127 each coordinate NADPH. Lys-128 contributes to the 1-deoxy-D-xylulose 5-phosphate binding site. Residue Glu-129 participates in NADPH binding. Asp-153 lines the Mn(2+) pocket. Residues Ser-154, Glu-155, Ser-184, and His-207 each contribute to the 1-deoxy-D-xylulose 5-phosphate site. Position 155 (Glu-155) interacts with Mn(2+). Gly-213 contributes to the NADPH binding site. 1-deoxy-D-xylulose 5-phosphate is bound by residues Ser-220, Asn-225, Lys-226, and Glu-229. Glu-229 is a Mn(2+) binding site.

It belongs to the DXR family. Mg(2+) is required as a cofactor. Requires Mn(2+) as cofactor.

It catalyses the reaction 2-C-methyl-D-erythritol 4-phosphate + NADP(+) = 1-deoxy-D-xylulose 5-phosphate + NADPH + H(+). Its pathway is isoprenoid biosynthesis; isopentenyl diphosphate biosynthesis via DXP pathway; isopentenyl diphosphate from 1-deoxy-D-xylulose 5-phosphate: step 1/6. In terms of biological role, catalyzes the NADPH-dependent rearrangement and reduction of 1-deoxy-D-xylulose-5-phosphate (DXP) to 2-C-methyl-D-erythritol 4-phosphate (MEP). This chain is 1-deoxy-D-xylulose 5-phosphate reductoisomerase, found in Stutzerimonas stutzeri (strain A1501) (Pseudomonas stutzeri).